The following is a 382-amino-acid chain: Lipid-A-disaccharide synthase (382 aa).

This sequence belongs to the LpxB family.

It catalyses the reaction 2-N,3-O-bis[(3R)-3-hydroxytetradecanoyl]-alpha-D-glucosaminyl 1-phosphate + UDP-2-N,3-O-bis[(3R)-3-hydroxytetradecanoyl]-alpha-D-glucosamine = lipid A disaccharide (E. coli) + UDP + H(+). The catalysed reaction is a lipid X + a UDP-2-N,3-O-bis[(3R)-3-hydroxyacyl]-alpha-D-glucosamine = a lipid A disaccharide + UDP + H(+). The protein operates within glycolipid biosynthesis; lipid IV(A) biosynthesis; lipid IV(A) from (3R)-3-hydroxytetradecanoyl-[acyl-carrier-protein] and UDP-N-acetyl-alpha-D-glucosamine: step 5/6. In terms of biological role, condensation of UDP-2,3-diacylglucosamine and 2,3-diacylglucosamine-1-phosphate to form lipid A disaccharide, a precursor of lipid A, a phosphorylated glycolipid that anchors the lipopolysaccharide to the outer membrane of the cell. This Escherichia fergusonii (strain ATCC 35469 / DSM 13698 / CCUG 18766 / IAM 14443 / JCM 21226 / LMG 7866 / NBRC 102419 / NCTC 12128 / CDC 0568-73) protein is Lipid-A-disaccharide synthase.